The sequence spans 480 residues: Ribulose bisphosphate carboxylase large chain (480 aa).

Residues 1–2 constitute a propeptide that is removed on maturation; that stretch reads MS. Pro-3 carries the post-translational modification N-acetylproline. An N6,N6,N6-trimethyllysine modification is found at Lys-14. Substrate contacts are provided by Asn-123 and Thr-173. Lys-175 acts as the Proton acceptor in catalysis. Lys-177 contacts substrate. 3 residues coordinate Mg(2+): Lys-201, Asp-203, and Glu-204. Position 201 is an N6-carboxylysine (Lys-201). His-294 functions as the Proton acceptor in the catalytic mechanism. Positions 295, 327, and 379 each coordinate substrate.

The protein belongs to the RuBisCO large chain family. Type I subfamily. As to quaternary structure, heterohexadecamer of 8 large chains and 8 small chains; disulfide-linked. The disulfide link is formed within the large subunit homodimers. The cofactor is Mg(2+). The disulfide bond which can form in the large chain dimeric partners within the hexadecamer appears to be associated with oxidative stress and protein turnover.

The protein resides in the plastid. It localises to the chloroplast. The catalysed reaction is 2 (2R)-3-phosphoglycerate + 2 H(+) = D-ribulose 1,5-bisphosphate + CO2 + H2O. The enzyme catalyses D-ribulose 1,5-bisphosphate + O2 = 2-phosphoglycolate + (2R)-3-phosphoglycerate + 2 H(+). Its function is as follows. RuBisCO catalyzes two reactions: the carboxylation of D-ribulose 1,5-bisphosphate, the primary event in carbon dioxide fixation, as well as the oxidative fragmentation of the pentose substrate in the photorespiration process. Both reactions occur simultaneously and in competition at the same active site. This chain is Ribulose bisphosphate carboxylase large chain, found in Gossypium barbadense (Sea Island cotton).